Reading from the N-terminus, the 252-residue chain is Ditrans,polycis-undecaprenyl-diphosphate synthase ((2E,6E)-farnesyl-diphosphate specific) (252 aa).

Asp-25 is an active-site residue. Asp-25 is a binding site for Mg(2+). Residues 26 to 29 (GNGR), Trp-30, Arg-38, His-42, and 70 to 72 (SSE) each bind substrate. Asn-73 functions as the Proton acceptor in the catalytic mechanism. Residues Trp-74, Arg-76, and Arg-193 each coordinate substrate. His-198 lines the Mg(2+) pocket. Residue 199–201 (RIS) participates in substrate binding. Glu-212 serves as a coordination point for Mg(2+).

It belongs to the UPP synthase family. As to quaternary structure, homodimer. It depends on Mg(2+) as a cofactor.

The enzyme catalyses 8 isopentenyl diphosphate + (2E,6E)-farnesyl diphosphate = di-trans,octa-cis-undecaprenyl diphosphate + 8 diphosphate. Its function is as follows. Catalyzes the sequential condensation of isopentenyl diphosphate (IPP) with (2E,6E)-farnesyl diphosphate (E,E-FPP) to yield (2Z,6Z,10Z,14Z,18Z,22Z,26Z,30Z,34E,38E)-undecaprenyl diphosphate (di-trans,octa-cis-UPP). UPP is the precursor of glycosyl carrier lipid in the biosynthesis of bacterial cell wall polysaccharide components such as peptidoglycan and lipopolysaccharide. In Salmonella typhi, this protein is Ditrans,polycis-undecaprenyl-diphosphate synthase ((2E,6E)-farnesyl-diphosphate specific).